The sequence spans 88 residues: RNA-binding protein Hfq (88 aa).

The Sm domain occupies 9 to 68; the sequence is DPFLNALRRERIPVSIYLVNGIKLQGQIESFDQFVILLKNTVNQMVYKHAISTVVPARAV. The disordered stretch occupies residues 66 to 88; sequence RAVSHHSGEQQRAPSDRPEKTED. Over residues 71 to 88 the composition is skewed to basic and acidic residues; the sequence is HSGEQQRAPSDRPEKTED.

It belongs to the Hfq family. Homohexamer.

Its function is as follows. RNA chaperone that binds small regulatory RNA (sRNAs) and mRNAs to facilitate mRNA translational regulation in response to envelope stress, environmental stress and changes in metabolite concentrations. Also binds with high specificity to tRNAs. The protein is RNA-binding protein Hfq of Vibrio atlanticus (strain LGP32) (Vibrio splendidus (strain Mel32)).